The following is a 122-amino-acid chain: Large ribosomal subunit protein uL14c (122 aa).

This sequence belongs to the universal ribosomal protein uL14 family. Part of the 50S ribosomal subunit.

It is found in the plastid. The protein localises to the chloroplast. Its function is as follows. Binds to 23S rRNA. This is Large ribosomal subunit protein uL14c from Vitis vinifera (Grape).